A 201-amino-acid chain; its full sequence is Large ribosomal subunit protein uL4 (201 aa).

Residues 44 to 71 (RAQKTRAEVSGSGKKPWRQKGTGRARSG) form a disordered region.

It belongs to the universal ribosomal protein uL4 family. In terms of assembly, part of the 50S ribosomal subunit.

In terms of biological role, one of the primary rRNA binding proteins, this protein initially binds near the 5'-end of the 23S rRNA. It is important during the early stages of 50S assembly. It makes multiple contacts with different domains of the 23S rRNA in the assembled 50S subunit and ribosome. Its function is as follows. Forms part of the polypeptide exit tunnel. This Actinobacillus succinogenes (strain ATCC 55618 / DSM 22257 / CCUG 43843 / 130Z) protein is Large ribosomal subunit protein uL4.